Consider the following 455-residue polypeptide: P2X purinoceptor 5 (455 aa).

Residues 1–34 (MGQAAWKGFVLSLFDYKTAKFVVAKSKKVGLLYR) are Cytoplasmic-facing. The helical transmembrane segment at 35–55 (VLQLIILLYLLIWVFLIKKSY) threads the bilayer. Over 56 to 341 (QDIDTSLQSA…SIIPTVINIG (286 aa)) the chain is Extracellular. ATP-binding residues include lysine 69 and lysine 71. N-linked (GlcNAc...) asparagine glycosylation is present at asparagine 77. Cystine bridges form between cysteine 118-cysteine 169, cysteine 129-cysteine 152, and cysteine 135-cysteine 163. N-linked (GlcNAc...) asparagine glycosylation is present at asparagine 157. Threonine 189 provides a ligand contact to ATP. Asparagine 202 carries N-linked (GlcNAc...) asparagine glycosylation. Intrachain disulfides connect cysteine 220/cysteine 229 and cysteine 263/cysteine 272. ATP is bound by residues asparagine 294, arginine 296, and lysine 314. A helical membrane pass occupies residues 342-362 (SGLALMGAGAFFCDLVLIYLI). Residues 363-455 (RKSEFYRDKK…QSQILHPVKT (93 aa)) are Cytoplasmic-facing. Positions 384 to 401 (NVEVEANEMEQERPEDEP) are enriched in acidic residues. The tract at residues 384–422 (NVEVEANEMEQERPEDEPLERVRQDEQSQELAQSGRKQN) is disordered. A compositionally biased stretch (polar residues) spans 412-422 (QELAQSGRKQN).

The protein belongs to the P2X receptor family. Functional P2XRs are organized as homomeric and heteromeric trimers. Homotrimer. Forms heterotrimer with P2RX1. In terms of tissue distribution, predominantly expressed in heart but are also present in brain, spinal cord and adrenal gland.

It localises to the cell membrane. It carries out the reaction Na(+)(in) = Na(+)(out). The catalysed reaction is Ca(2+)(in) = Ca(2+)(out). The enzyme catalyses chloride(in) = chloride(out). Activated by ATP. Slowly desensitizing. Not activated by ATP agonist alpha/beta-methylene-ATP. Highly sensitive to the antagonists suramin and PPADS. In terms of biological role, ATP-gated nonselective transmembrane cation channel. Permeable to potassium, sodium and calcium. Unlike other P2RX receptors, the P2X5 receptor is also permeable to chloride. Acts as an important regulator of inflammatory-related bone loss and osteoclast multinucleation. This Rattus norvegicus (Rat) protein is P2X purinoceptor 5 (P2rx5).